A 613-amino-acid chain; its full sequence is MESCDCFETHVNQDDLLVKYQYISDALIALAYFSIPLELIYFVQKSAFFPYKWVLMQFGAFIILCGATHFINLWMFFMHSKAVAIVMTIAKVSCAVVSCATALMLVHIIPDLLSVKNRELFLKKKADELDREMGLILTQEETGRHVRMLTHGIRRTLDRHTILRTTLVELGKTLCLEECALWMPSQSGLYLQLSHTLSHKIQVGSSVPINLPIINELFNSAQAMHIPHSCPLAKIGPPVGRYSPPEVVSVRVPLLHLSNFQGSDWSDLSGKGYAIMVLILPTDGARKWRDHELELVENVADQVAVALSHAAILEESMHARDQLMEQNFALDKARQEAEMAVHARNDFLAVMNHEMRTPMHAIISLSSLLLETELSPEQRVMIETILKSSNLVATLISDVLDLSRLEDGSLLLENEPFSLQAIFEEVISLIKPIASVKKLSTNLILSADLPTYAIGDEKRLMQTILNIMGNAVKFTKEGYISIIASIMKPESLQELPSPEFFPVLSDSHFYLCVQVKDTGCGIHTQDIPLLFTKFVQPRTGTQRNHSGGGLGLALCKRFVGLMGGYMWIESEGLEKGCTASFIIRLGICNGPSSSSGSMALHLAAKSQTRPWNW.

3 consecutive transmembrane segments (helical) span residues 23-43 (ISDA…IYFV), 58-78 (FGAF…MFFM), and 95-115 (AVVS…LLSV). 2 residues coordinate Cu cation: Cys65 and His69. One can recognise a GAF domain in the interval 158-307 (DRHTILRTTL…NVADQVAVAL (150 aa)). A Histidine kinase domain is found at 350 to 589 (VMNHEMRTPM…SFIIRLGICN (240 aa)). His353 bears the Phosphohistidine; by autocatalysis mark.

Belongs to the ethylene receptor family. Homodimer; disulfide-linked. Heteromer with ETR1. It depends on Cu cation as a cofactor. Post-translationally, autophosphorylated on both His and Ser residues in the presence of manganese. Loss of His autophosphorylation in the presence of both manganese and magnesium. In terms of tissue distribution, expressed in etiolated seedlings, leaves, stems, roots, flowers, embryos, anthers, carpels and ovules.

Its subcellular location is the endoplasmic reticulum membrane. It carries out the reaction ATP + protein L-histidine = ADP + protein N-phospho-L-histidine.. Ethylene receptor related to bacterial two-component regulators. Acts as a redundant negative regulator of ethylene signaling. The sequence is that of Ethylene response sensor 1 (ERS1) from Arabidopsis thaliana (Mouse-ear cress).